Here is a 372-residue protein sequence, read N- to C-terminus: Putative glutamate--cysteine ligase 2 (372 aa).

The protein belongs to the glutamate--cysteine ligase type 2 family. YbdK subfamily. As to quaternary structure, homodimer.

The catalysed reaction is L-cysteine + L-glutamate + ATP = gamma-L-glutamyl-L-cysteine + ADP + phosphate + H(+). Its function is as follows. ATP-dependent carboxylate-amine ligase which exhibits weak glutamate--cysteine ligase activity. This chain is Putative glutamate--cysteine ligase 2 (ybdK), found in Salmonella typhimurium (strain LT2 / SGSC1412 / ATCC 700720).